A 297-amino-acid chain; its full sequence is HTH-type transcriptional regulator ArgP (297 aa).

The 57-residue stretch at 4–60 (PDYRTLQALDAVIRERGFERAAQKLCITQSAVSQRIKQLENLFGQPLLVRTVPPRPT) folds into the HTH lysR-type domain. Positions 21–40 (FERAAQKLCITQSAVSQRIK) form a DNA-binding region, H-T-H motif.

Belongs to the LysR transcriptional regulatory family. As to quaternary structure, homodimer.

Controls the transcription of genes involved in arginine and lysine metabolism. The polypeptide is HTH-type transcriptional regulator ArgP (Yersinia enterocolitica serotype O:8 / biotype 1B (strain NCTC 13174 / 8081)).